Reading from the N-terminus, the 271-residue chain is Hydroxyethylthiazole kinase (271 aa).

Position 45 (Met-45) interacts with substrate. Arg-121 and Thr-168 together coordinate ATP. Gly-195 contributes to the substrate binding site.

It belongs to the Thz kinase family. Requires Mg(2+) as cofactor.

It catalyses the reaction 5-(2-hydroxyethyl)-4-methylthiazole + ATP = 4-methyl-5-(2-phosphooxyethyl)-thiazole + ADP + H(+). The protein operates within cofactor biosynthesis; thiamine diphosphate biosynthesis; 4-methyl-5-(2-phosphoethyl)-thiazole from 5-(2-hydroxyethyl)-4-methylthiazole: step 1/1. Functionally, catalyzes the phosphorylation of the hydroxyl group of 4-methyl-5-beta-hydroxyethylthiazole (THZ). This chain is Hydroxyethylthiazole kinase, found in Bacillus pumilus (strain SAFR-032).